We begin with the raw amino-acid sequence, 91 residues long: Large ribosomal subunit protein uL23 (91 aa).

This sequence belongs to the universal ribosomal protein uL23 family. Part of the 50S ribosomal subunit. Contacts protein L29, and trigger factor when it is bound to the ribosome.

In terms of biological role, one of the early assembly proteins it binds 23S rRNA. One of the proteins that surrounds the polypeptide exit tunnel on the outside of the ribosome. Forms the main docking site for trigger factor binding to the ribosome. In Macrococcus caseolyticus (strain JCSC5402) (Macrococcoides caseolyticum), this protein is Large ribosomal subunit protein uL23.